The sequence spans 151 residues: Acidic phospholipase A2 4 (151 aa).

An N-terminal signal peptide occupies residues 1–27; it reads MYPAHLLVLLAVCVSLLGAASIPARPL. Cystine bridges form between C38–C104, C54–C151, C56–C72, C71–C132, C78–C125, C88–C118, and C111–C123. The Ca(2+) site is built by Y55, G57, and G59. H75 is a catalytic residue. Ca(2+) is bound at residue D76. Residue D126 is part of the active site.

It belongs to the phospholipase A2 family. Group I subfamily. D49 sub-subfamily. Requires Ca(2+) as cofactor. In terms of tissue distribution, expressed by the venom gland.

It is found in the secreted. The catalysed reaction is a 1,2-diacyl-sn-glycero-3-phosphocholine + H2O = a 1-acyl-sn-glycero-3-phosphocholine + a fatty acid + H(+). Functionally, PLA2 catalyzes the calcium-dependent hydrolysis of the 2-acyl groups in 3-sn-phosphoglycerides. This Tropidechis carinatus (Australian rough-scaled snake) protein is Acidic phospholipase A2 4.